The primary structure comprises 201 residues: Recombination protein RecR (201 aa).

The C4-type zinc finger occupies 60–75 (CSCCGNVDTIDPCTVC). In terms of domain architecture, Toprim spans 83–178 (SVIIVVEDVA…KITRLAHGVP (96 aa)).

It belongs to the RecR family.

Functionally, may play a role in DNA repair. It seems to be involved in an RecBC-independent recombinational process of DNA repair. It may act with RecF and RecO. This is Recombination protein RecR from Sinorhizobium fredii (strain NBRC 101917 / NGR234).